The primary structure comprises 87 residues: Small ribosomal subunit protein uS15 (87 aa).

It belongs to the universal ribosomal protein uS15 family. In terms of assembly, part of the 30S ribosomal subunit. Forms a bridge to the 50S subunit in the 70S ribosome, contacting the 23S rRNA.

One of the primary rRNA binding proteins, it binds directly to 16S rRNA where it helps nucleate assembly of the platform of the 30S subunit by binding and bridging several RNA helices of the 16S rRNA. Functionally, forms an intersubunit bridge (bridge B4) with the 23S rRNA of the 50S subunit in the ribosome. The protein is Small ribosomal subunit protein uS15 of Clostridium acetobutylicum (strain ATCC 824 / DSM 792 / JCM 1419 / IAM 19013 / LMG 5710 / NBRC 13948 / NRRL B-527 / VKM B-1787 / 2291 / W).